Here is a 393-residue protein sequence, read N- to C-terminus: 1-deoxy-D-xylulose 5-phosphate reductoisomerase (393 aa).

Residues threonine 13, glycine 14, serine 15, isoleucine 16, and asparagine 128 each contribute to the NADPH site. 1-deoxy-D-xylulose 5-phosphate is bound at residue lysine 129. NADPH is bound at residue glutamate 130. Aspartate 154 is a binding site for Mn(2+). Residues serine 155, glutamate 156, serine 178, and histidine 201 each contribute to the 1-deoxy-D-xylulose 5-phosphate site. Glutamate 156 contributes to the Mn(2+) binding site. Residue glycine 207 participates in NADPH binding. Residues serine 214, asparagine 219, lysine 220, and glutamate 223 each contribute to the 1-deoxy-D-xylulose 5-phosphate site. Residue glutamate 223 participates in Mn(2+) binding.

The protein belongs to the DXR family. The cofactor is Mg(2+). Mn(2+) is required as a cofactor.

The catalysed reaction is 2-C-methyl-D-erythritol 4-phosphate + NADP(+) = 1-deoxy-D-xylulose 5-phosphate + NADPH + H(+). It functions in the pathway isoprenoid biosynthesis; isopentenyl diphosphate biosynthesis via DXP pathway; isopentenyl diphosphate from 1-deoxy-D-xylulose 5-phosphate: step 1/6. Functionally, catalyzes the NADPH-dependent rearrangement and reduction of 1-deoxy-D-xylulose-5-phosphate (DXP) to 2-C-methyl-D-erythritol 4-phosphate (MEP). The sequence is that of 1-deoxy-D-xylulose 5-phosphate reductoisomerase from Acidithiobacillus ferrooxidans (strain ATCC 23270 / DSM 14882 / CIP 104768 / NCIMB 8455) (Ferrobacillus ferrooxidans (strain ATCC 23270)).